Consider the following 728-residue polypeptide: Catalase-peroxidase 1 (728 aa).

Residues 91-218 (WHSAGTYRTA…LAAVQMGLIY (128 aa)) constitute a cross-link (tryptophyl-tyrosyl-methioninium (Trp-Tyr) (with M-244)). H92 serves as the catalytic Proton acceptor. Residues 218–244 (YVNPEGPDGNPDPVAAAHDIRETFARM) constitute a cross-link (tryptophyl-tyrosyl-methioninium (Tyr-Met) (with W-91)). H259 contributes to the heme b binding site.

Belongs to the peroxidase family. Peroxidase/catalase subfamily. In terms of assembly, homodimer or homotetramer. Requires heme b as cofactor. Formation of the three residue Trp-Tyr-Met cross-link is important for the catalase, but not the peroxidase activity of the enzyme.

It carries out the reaction H2O2 + AH2 = A + 2 H2O. It catalyses the reaction 2 H2O2 = O2 + 2 H2O. Functionally, bifunctional enzyme with both catalase and broad-spectrum peroxidase activity. The protein is Catalase-peroxidase 1 of Burkholderia orbicola (strain MC0-3).